The chain runs to 208 residues: MAEFSPVLPPLRDDGGGGRYGQPLFPRSRSGSESDSELSQSLARTKTRSYGSTASVTAPLGEKYIEHRVTDGETLQGIALKYGVTMEQIKRVNKLFSNDCIFLRNTLSIPVKSEKRSLFNGLSLESPDSEGNTPQESPCVSQDVDAPSPPPEPSVPEPNTRPVQAEELSAKDYLHRLDLQIKQSKLAARKLKEDGGREEDDTNSYQEI.

A disordered region spans residues 1–54; that stretch reads MAEFSPVLPPLRDDGGGGRYGQPLFPRSRSGSESDSELSQSLARTKTRSYGSTA. Over residues 27–42 the composition is skewed to low complexity; sequence RSRSGSESDSELSQSL. Residues 65–109 enclose the LysM domain; that stretch reads IEHRVTDGETLQGIALKYGVTMEQIKRVNKLFSNDCIFLRNTLSI. Disordered stretches follow at residues 122–169 and 187–208; these read LSLE…EELS and AARK…YQEI. The segment covering 129–140 has biased composition (polar residues); it reads SEGNTPQESPCV. Residues 147 to 156 show a composition bias toward pro residues; it reads PSPPPEPSVP.

In Danio rerio (Zebrafish), this protein is LysM and putative peptidoglycan-binding domain-containing protein 2 (lysmd2).